The following is a 219-amino-acid chain: Ras-related protein Rab-3B (219 aa).

A2 carries the N-acetylalanine modification. Residues S31, S32, V33, G34, K35, T36, S37, P49, and S53 each coordinate GTP. S32 serves as a coordination point for GDP. GDP-binding residues include G34, K35, T36, and S37. T36 contributes to the Mg(2+) binding site. The Switch 1 motif lies at 45–58 (DTFTPAFVSTVGID). Residues T54 and D77 each contribute to the Mg(2+) site. The Switch 2 motif lies at 78-96 (TAGQERYRTITTAYYRGAM). Position 80 (G80) interacts with GTP. A Phosphothreonine; by LRRK2 modification is found at T86. Residues N135, K136, and D138 each coordinate GTP. Residues N135, K136, D138, M139, A166, and K167 each coordinate GDP. Residues A166 and K167 each contribute to the GTP site. A phosphoserine mark is found at S188 and S190. S-geranylgeranyl cysteine attachment occurs at residues C217 and C219. C219 is subject to Cysteine methyl ester.

Belongs to the small GTPase superfamily. Rab family. As to quaternary structure, interacts with RIMS1, RIMS2, RPH3A and RPH3AL. The GTP-bound form interacts with GAS8/DRC4 (via coiled-coil domains). The GTP-bound form interacts with REP15. Interacts with GDI2, CHM and CHML; phosphorylation at Thr-86 disrupts these interactions. Interacts with MADD (via uDENN domain); the GTP-bound form is preferred for interaction. It depends on Mg(2+) as a cofactor. Phosphorylation of Thr-86 in the switch II region by LRRK2 prevents the association of RAB regulatory proteins, including CHM, CHML and RAB GDP dissociation inhibitor GDI2.

It is found in the cell membrane. It localises to the golgi apparatus. The catalysed reaction is GTP + H2O = GDP + phosphate + H(+). Regulated by guanine nucleotide exchange factors (GEFs) which promote the exchange of bound GDP for free GTP. Regulated by GTPase activating proteins (GAPs) which increase the GTP hydrolysis activity. Inhibited by GDP dissociation inhibitors (GDIs) which prevent Rab-GDP dissociation. In terms of biological role, the small GTPases Rab are key regulators of intracellular membrane trafficking, from the formation of transport vesicles to their fusion with membranes. Rabs cycle between an inactive GDP-bound form and an active GTP-bound form that is able to recruit to membranes different sets of downstream effectors directly responsible for vesicle formation, movement, tethering and fusion. This is Ras-related protein Rab-3B from Homo sapiens (Human).